A 184-amino-acid polypeptide reads, in one-letter code: ATP synthase subunit b, chloroplastic (184 aa).

Residues 26–48 form a helical membrane-spanning segment; that stretch reads ILATNLINLSVVLGVLIFFGKGV.

Belongs to the ATPase B chain family. As to quaternary structure, F-type ATPases have 2 components, F(1) - the catalytic core - and F(0) - the membrane proton channel. F(1) has five subunits: alpha(3), beta(3), gamma(1), delta(1), epsilon(1). F(0) has four main subunits: a(1), b(1), b'(1) and c(10-14). The alpha and beta chains form an alternating ring which encloses part of the gamma chain. F(1) is attached to F(0) by a central stalk formed by the gamma and epsilon chains, while a peripheral stalk is formed by the delta, b and b' chains.

The protein resides in the plastid. Its subcellular location is the chloroplast thylakoid membrane. In terms of biological role, f(1)F(0) ATP synthase produces ATP from ADP in the presence of a proton or sodium gradient. F-type ATPases consist of two structural domains, F(1) containing the extramembraneous catalytic core and F(0) containing the membrane proton channel, linked together by a central stalk and a peripheral stalk. During catalysis, ATP synthesis in the catalytic domain of F(1) is coupled via a rotary mechanism of the central stalk subunits to proton translocation. Component of the F(0) channel, it forms part of the peripheral stalk, linking F(1) to F(0). The chain is ATP synthase subunit b, chloroplastic from Acorus calamus (Sweet flag).